The primary structure comprises 134 residues: Small ribosomal subunit protein uS17c (134 aa).

The N-terminal 37 residues, 1-37, are a transit peptide targeting the chloroplast; that stretch reads HHFFTGNGIGLNRFSNPISSPQTQTQTRSLPFPAIKA. Residues 106 to 134 form a disordered region; sequence FLAVPAPSRKSKKAGSSGELGIPLQSQQE.

It belongs to the universal ribosomal protein uS17 family. As to quaternary structure, part of the 30S ribosomal subunit.

The protein resides in the plastid. Its subcellular location is the chloroplast. Functionally, one of the primary rRNA binding proteins, it binds specifically to the 5'-end of 16S ribosomal RNA. This is Small ribosomal subunit protein uS17c (RPS17) from Pisum sativum (Garden pea).